A 475-amino-acid chain; its full sequence is Dihydrolipoyl dehydrogenase (475 aa).

FAD-binding positions include 36–45 (ERYNTLGGVC), K54, and G117. C45 and C50 are disulfide-bonded. Residues 182 to 186 (GGGII), E205, V238, and 270 to 273 (AIGR) contribute to the NAD(+) site. Positions 313 and 321 each coordinate FAD. H445 acts as the Proton acceptor in catalysis.

It belongs to the class-I pyridine nucleotide-disulfide oxidoreductase family. It depends on FAD as a cofactor.

It is found in the cytoplasm. The enzyme catalyses N(6)-[(R)-dihydrolipoyl]-L-lysyl-[protein] + NAD(+) = N(6)-[(R)-lipoyl]-L-lysyl-[protein] + NADH + H(+). Its function is as follows. The branched-chain alpha-keto dehydrogenase complex catalyzes the overall conversion of alpha-keto acids to acyl-CoA and CO(2). It contains multiple copies of 3 enzymatic components: branched-chain alpha-keto acid decarboxylase (E1), lipoamide acyltransferase (E2) and lipoamide dehydrogenase (E3). This chain is Dihydrolipoyl dehydrogenase (lpd), found in Vibrio cholerae serotype O1 (strain ATCC 39315 / El Tor Inaba N16961).